The chain runs to 135 residues: Endoribonuclease YbeY (135 aa).

The Zn(2+) site is built by His102, His106, and His112.

This sequence belongs to the endoribonuclease YbeY family. The cofactor is Zn(2+).

It localises to the cytoplasm. Functionally, single strand-specific metallo-endoribonuclease involved in late-stage 70S ribosome quality control and in maturation of the 3' terminus of the 16S rRNA. The protein is Endoribonuclease YbeY of Rubrobacter xylanophilus (strain DSM 9941 / JCM 11954 / NBRC 16129 / PRD-1).